We begin with the raw amino-acid sequence, 267 residues long: Undecaprenyl-diphosphatase (267 aa).

8 helical membrane-spanning segments follow: residues 1–21 (MSYF…FLPI), 39–59 (QGLA…VIYF), 83–103 (AKLA…GLVM), 111–131 (LRSA…LWWV), 144–164 (AGWK…IPGT), 189–209 (FLMS…KLVT), 218–238 (FLLT…HLFL), and 246–266 (MTPF…YLLM).

The protein belongs to the UppP family.

The protein resides in the cell inner membrane. The catalysed reaction is di-trans,octa-cis-undecaprenyl diphosphate + H2O = di-trans,octa-cis-undecaprenyl phosphate + phosphate + H(+). Functionally, catalyzes the dephosphorylation of undecaprenyl diphosphate (UPP). Confers resistance to bacitracin. This chain is Undecaprenyl-diphosphatase, found in Vibrio vulnificus (strain CMCP6).